Reading from the N-terminus, the 599-residue chain is Elongation factor 4 (599 aa).

Residues 4–186 enclose the tr-type G domain; that stretch reads ENIRNFSIIA…EIVTKIPPPQ (183 aa). Residues 16–21 and 133–136 contribute to the GTP site; these read DHGKST and NKID.

Belongs to the TRAFAC class translation factor GTPase superfamily. Classic translation factor GTPase family. LepA subfamily.

It localises to the cell inner membrane. The enzyme catalyses GTP + H2O = GDP + phosphate + H(+). Functionally, required for accurate and efficient protein synthesis under certain stress conditions. May act as a fidelity factor of the translation reaction, by catalyzing a one-codon backward translocation of tRNAs on improperly translocated ribosomes. Back-translocation proceeds from a post-translocation (POST) complex to a pre-translocation (PRE) complex, thus giving elongation factor G a second chance to translocate the tRNAs correctly. Binds to ribosomes in a GTP-dependent manner. In Geotalea uraniireducens (strain Rf4) (Geobacter uraniireducens), this protein is Elongation factor 4.